A 275-amino-acid polypeptide reads, in one-letter code: Exosome complex component Rrp42 (275 aa).

Belongs to the RNase PH family. Rrp42 subfamily. As to quaternary structure, component of the archaeal exosome complex. Forms a hexameric ring-like arrangement composed of 3 Rrp41-Rrp42 heterodimers. The hexameric ring associates with a trimer of Rrp4 and/or Csl4 subunits.

It is found in the cytoplasm. Functionally, non-catalytic component of the exosome, which is a complex involved in RNA degradation. Contributes to the structuring of the Rrp41 active site. The polypeptide is Exosome complex component Rrp42 (Sulfurisphaera tokodaii (strain DSM 16993 / JCM 10545 / NBRC 100140 / 7) (Sulfolobus tokodaii)).